A 159-amino-acid chain; its full sequence is Succinate dehydrogenase [ubiquinone] cytochrome b small subunit, mitochondrial (159 aa).

Residues 1–56 (MAVLWRLSAVCGAQGGRALLLRTPVVRPAHISAFLQDRPIPEWCGVQHIHLSPGHH) constitute a mitochondrion transit peptide. Residues 57-63 (SGSKAAS) lie on the Mitochondrial matrix side of the membrane. A helical transmembrane segment spans residues 64-85 (LHWTSERVVSVLLLGLLPAAYL). Residues 86–90 (NPCSA) are Mitochondrial intermembrane-facing. A helical transmembrane segment spans residues 91 to 111 (MDYSLAATLTLHGHWGLGQVV). Residue histidine 102 coordinates heme b. The Mitochondrial matrix segment spans residues 112 to 120 (TDYVHGDAS). Residue tyrosine 114 participates in a ubiquinone binding. A helical transmembrane segment spans residues 121–142 (QKAAKAGLLALSALTFAGLCYF). Over 143-159 (NYHDVGICKAVAMLWKL) the chain is Mitochondrial intermembrane.

Belongs to the CybS family. In terms of assembly, component of complex II composed of four subunits: the flavoprotein (FP) SDHA, iron-sulfur protein (IP) SDHB, and a cytochrome b560 composed of SDHC and SDHD.

It is found in the mitochondrion inner membrane. It functions in the pathway carbohydrate metabolism; tricarboxylic acid cycle. Membrane-anchoring subunit of succinate dehydrogenase (SDH) that is involved in complex II of the mitochondrial electron transport chain and is responsible for transferring electrons from succinate to ubiquinone (coenzyme Q). SDH also oxidizes malate to the non-canonical enol form of oxaloacetate, enol-oxaloacetate. Enol-oxaloacetate, which is a potent inhibitor of the succinate dehydrogenase activity, is further isomerized into keto-oxaloacetate. The chain is Succinate dehydrogenase [ubiquinone] cytochrome b small subunit, mitochondrial (SDHD) from Pongo abelii (Sumatran orangutan).